The chain runs to 231 residues: Somatolactin (231 aa).

Residues 1–24 (MLMFTAIQRGVWVALLWPHLLTAS) form the signal peptide. Cystine bridges form between Cys-29/Cys-39, Cys-89/Cys-205, and Cys-222/Cys-230. N-linked (GlcNAc...) asparagine glycans are attached at residues Asn-35 and Asn-145.

Belongs to the somatotropin/prolactin family. Pituitary gland.

Its subcellular location is the secreted. This Siganus guttatus (Orange-spotted spinefoot) protein is Somatolactin.